Here is a 338-residue protein sequence, read N- to C-terminus: DNA-directed RNA polymerase subunit alpha (338 aa).

The segment at 1-234 is alpha N-terminal domain (alpha-NTD); the sequence is MIERNWNELI…DQLQIFITFE (234 aa). The interval 250-338 is alpha C-terminal domain (alpha-CTD); that stretch reads FNPALLKKVD…DLAKKFEDQI (89 aa).

The protein belongs to the RNA polymerase alpha chain family. As to quaternary structure, homodimer. The RNAP catalytic core consists of 2 alpha, 1 beta, 1 beta' and 1 omega subunit. When a sigma factor is associated with the core the holoenzyme is formed, which can initiate transcription.

It carries out the reaction RNA(n) + a ribonucleoside 5'-triphosphate = RNA(n+1) + diphosphate. In terms of biological role, DNA-dependent RNA polymerase catalyzes the transcription of DNA into RNA using the four ribonucleoside triphosphates as substrates. This chain is DNA-directed RNA polymerase subunit alpha, found in Caulobacter vibrioides (strain ATCC 19089 / CIP 103742 / CB 15) (Caulobacter crescentus).